The chain runs to 179 residues: O-acetyl-ADP-ribose deacetylase (179 aa).

In terms of domain architecture, Macro spans 1 to 175 (MTSRLQVIQG…LYARLLTQQG (175 aa)). Substrate contacts are provided by residues 11–12 (DI), asparagine 25, 33–35 (GVD), and 122–126 (STGVY). Aspartate 35 functions as the Proton acceptor in the catalytic mechanism.

This sequence belongs to the MacroD-type family. YmdB subfamily. Homodimer. Interacts with RNase III.

The catalysed reaction is 3''-O-acetyl-ADP-D-ribose + H2O = ADP-D-ribose + acetate + H(+). It catalyses the reaction 2''-O-acetyl-ADP-D-ribose + H2O = ADP-D-ribose + acetate + H(+). In terms of biological role, deacetylates O-acetyl-ADP ribose to yield ADP-ribose and free acetate. Down-regulates ribonuclease 3 (RNase III) activity. Acts by interacting directly with the region of the ribonuclease that is required for dimerization/activation. In Salmonella newport (strain SL254), this protein is O-acetyl-ADP-ribose deacetylase.